Consider the following 253-residue polypeptide: uncharacterized protein (253 aa).

A signal peptide spans 1 to 19 (MRYLKKVTIYISLLILVSG). Cys20 carries N-palmitoyl cysteine lipidation. Residue Cys20 is the site of S-diacylglycerol cysteine attachment.

The protein belongs to the staphylococcal tandem lipoprotein family.

The protein resides in the cell membrane. This is an uncharacterized protein from Staphylococcus epidermidis (strain ATCC 35984 / DSM 28319 / BCRC 17069 / CCUG 31568 / BM 3577 / RP62A).